A 118-amino-acid chain; its full sequence is Large ribosomal subunit protein uL18 (118 aa).

Belongs to the universal ribosomal protein uL18 family. Part of the 50S ribosomal subunit; part of the 5S rRNA/L5/L18/L25 subcomplex. Contacts the 5S and 23S rRNAs.

Its function is as follows. This is one of the proteins that bind and probably mediate the attachment of the 5S RNA into the large ribosomal subunit, where it forms part of the central protuberance. The sequence is that of Large ribosomal subunit protein uL18 from Zymomonas mobilis subsp. mobilis (strain ATCC 31821 / ZM4 / CP4).